The chain runs to 294 residues: Acetyl-coenzyme A carboxylase carboxyl transferase subunit beta (294 aa).

Residues 30–294 (IMTKCPECKK…PETGGESDGE (265 aa)) enclose the CoA carboxyltransferase N-terminal domain. Zn(2+) contacts are provided by C34, C37, C53, and C56. A C4-type zinc finger spans residues 34–56 (CPECKKIMYTKELQKNLMVCNYC).

This sequence belongs to the AccD/PCCB family. In terms of assembly, acetyl-CoA carboxylase is a heterohexamer composed of biotin carboxyl carrier protein (AccB), biotin carboxylase (AccC) and two subunits each of ACCase subunit alpha (AccA) and ACCase subunit beta (AccD). Zn(2+) serves as cofactor.

It is found in the cytoplasm. It catalyses the reaction N(6)-carboxybiotinyl-L-lysyl-[protein] + acetyl-CoA = N(6)-biotinyl-L-lysyl-[protein] + malonyl-CoA. Its pathway is lipid metabolism; malonyl-CoA biosynthesis; malonyl-CoA from acetyl-CoA: step 1/1. In terms of biological role, component of the acetyl coenzyme A carboxylase (ACC) complex. Biotin carboxylase (BC) catalyzes the carboxylation of biotin on its carrier protein (BCCP) and then the CO(2) group is transferred by the transcarboxylase to acetyl-CoA to form malonyl-CoA. The sequence is that of Acetyl-coenzyme A carboxylase carboxyl transferase subunit beta from Listeria welshimeri serovar 6b (strain ATCC 35897 / DSM 20650 / CCUG 15529 / CIP 8149 / NCTC 11857 / SLCC 5334 / V8).